Reading from the N-terminus, the 91-residue chain is Potassium channel toxin BuTXK-beta (91 aa).

The N-terminal stretch at 1–20 (MQRNLVVLLLLGMVALSSCG) is a signal peptide. Residues 21 to 27 (LREKHFQ) constitute a propeptide that is removed on maturation. One can recognise a BetaSPN-type CS-alpha/beta domain in the interval 54-91 (QFGCPAYQGYCDDHCQDIKKEEGFCHGMKCKCGIPMGF). Disulfide bonds link cysteine 57–cysteine 78, cysteine 64–cysteine 83, and cysteine 68–cysteine 85.

This sequence belongs to the long chain scorpion toxin family. Class 1 subfamily. In terms of tissue distribution, expressed by the venom gland.

It is found in the secreted. Inhibits voltage-gated potassium channel. The sequence is that of Potassium channel toxin BuTXK-beta from Buthus israelis (Israeli scorpion).